The following is a 177-amino-acid chain: Large ribosomal subunit protein uL6 (177 aa).

Belongs to the universal ribosomal protein uL6 family. As to quaternary structure, part of the 50S ribosomal subunit.

Its function is as follows. This protein binds to the 23S rRNA, and is important in its secondary structure. It is located near the subunit interface in the base of the L7/L12 stalk, and near the tRNA binding site of the peptidyltransferase center. This chain is Large ribosomal subunit protein uL6, found in Bordetella avium (strain 197N).